We begin with the raw amino-acid sequence, 248 residues long: DNA repair protein RecO (248 aa).

It belongs to the RecO family.

Functionally, involved in DNA repair and RecF pathway recombination. The sequence is that of DNA repair protein RecO from Bradyrhizobium sp. (strain ORS 278).